Here is a 324-residue protein sequence, read N- to C-terminus: tRNA uridine(34) hydroxylase (324 aa).

Residues 145–239 (NDKKTIFIDM…YVHDARKNGL (95 aa)) form the Rhodanese domain. Catalysis depends on cysteine 199, which acts as the Cysteine persulfide intermediate.

The protein belongs to the TrhO family.

It catalyses the reaction uridine(34) in tRNA + AH2 + O2 = 5-hydroxyuridine(34) in tRNA + A + H2O. Its function is as follows. Catalyzes oxygen-dependent 5-hydroxyuridine (ho5U) modification at position 34 in tRNAs. This Buchnera aphidicola subsp. Acyrthosiphon pisum (strain APS) (Acyrthosiphon pisum symbiotic bacterium) protein is tRNA uridine(34) hydroxylase.